A 439-amino-acid chain; its full sequence is Methionine aminopeptidase 2-1 (439 aa).

Residues 1-87 (MSGGESRSPD…DKLFPSGNFP (87 aa)) form a disordered region. Positions 22–32 (GGDDEESDGDG) are enriched in acidic residues. Residues 47-61 (KKRKKRNKKKSKKKS) are compositionally biased toward basic residues. Substrate is bound at residue His190. Residues Asp211, Asp222, and His291 each coordinate a divalent metal cation. Substrate is bound at residue His299. A divalent metal cation-binding residues include Glu324 and Glu420.

The protein belongs to the peptidase M24A family. Methionine aminopeptidase eukaryotic type 2 subfamily. Requires Co(2+) as cofactor. It depends on Zn(2+) as a cofactor. Mn(2+) serves as cofactor. Fe(2+) is required as a cofactor.

The protein localises to the cytoplasm. The enzyme catalyses Release of N-terminal amino acids, preferentially methionine, from peptides and arylamides.. Functionally, cotranslationally removes the N-terminal methionine from nascent proteins. The N-terminal methionine is often cleaved when the second residue in the primary sequence is small and uncharged (Met-Ala-, Cys, Gly, Pro, Ser, Thr, or Val). The polypeptide is Methionine aminopeptidase 2-1 (Chaetomium globosum (strain ATCC 6205 / CBS 148.51 / DSM 1962 / NBRC 6347 / NRRL 1970) (Soil fungus)).